Here is a 160-residue protein sequence, read N- to C-terminus: Protein FrzA (160 aa).

Residues 14–155 (EQEFFCFRVG…FSKLLQTARQ (142 aa)) form the CheW-like domain.

Its function is as follows. Necessary for proper aggregation of cells to form fruiting bodies. FRZ genes define a system of signal transduction analogous to the enterobacterial chemotaxis systems. This is Protein FrzA (frzA) from Myxococcus xanthus.